The primary structure comprises 368 residues: Transaldolase (368 aa).

Residue lysine 140 is the Schiff-base intermediate with substrate of the active site.

The protein belongs to the transaldolase family. Type 2 subfamily.

Its subcellular location is the cytoplasm. It carries out the reaction D-sedoheptulose 7-phosphate + D-glyceraldehyde 3-phosphate = D-erythrose 4-phosphate + beta-D-fructose 6-phosphate. The protein operates within carbohydrate degradation; pentose phosphate pathway; D-glyceraldehyde 3-phosphate and beta-D-fructose 6-phosphate from D-ribose 5-phosphate and D-xylulose 5-phosphate (non-oxidative stage): step 2/3. Transaldolase is important for the balance of metabolites in the pentose-phosphate pathway. The sequence is that of Transaldolase from Thermobifida fusca (strain YX).